We begin with the raw amino-acid sequence, 886 residues long: Alanine--tRNA ligase (886 aa).

Residues His570, His574, Cys673, and His677 each coordinate Zn(2+).

The protein belongs to the class-II aminoacyl-tRNA synthetase family. The cofactor is Zn(2+).

Its subcellular location is the cytoplasm. It carries out the reaction tRNA(Ala) + L-alanine + ATP = L-alanyl-tRNA(Ala) + AMP + diphosphate. Its function is as follows. Catalyzes the attachment of alanine to tRNA(Ala) in a two-step reaction: alanine is first activated by ATP to form Ala-AMP and then transferred to the acceptor end of tRNA(Ala). Also edits incorrectly charged Ser-tRNA(Ala) and Gly-tRNA(Ala) via its editing domain. This chain is Alanine--tRNA ligase, found in Chlorobium chlorochromatii (strain CaD3).